The primary structure comprises 724 residues: 1,4-alpha-glucan branching enzyme GlgB 1 (724 aa).

Residue Asp-403 is the Nucleophile of the active site. The active-site Proton donor is Glu-456.

It belongs to the glycosyl hydrolase 13 family. GlgB subfamily. In terms of assembly, monomer.

It catalyses the reaction Transfers a segment of a (1-&gt;4)-alpha-D-glucan chain to a primary hydroxy group in a similar glucan chain.. It participates in glycan biosynthesis; glycogen biosynthesis. Catalyzes the formation of the alpha-1,6-glucosidic linkages in glycogen by scission of a 1,4-alpha-linked oligosaccharide from growing alpha-1,4-glucan chains and the subsequent attachment of the oligosaccharide to the alpha-1,6 position. This is 1,4-alpha-glucan branching enzyme GlgB 1 from Xanthomonas campestris pv. campestris (strain 8004).